We begin with the raw amino-acid sequence, 460 residues long: Flavonol 3-O-glucosyltransferase (460 aa).

H23 (proton acceptor) is an active-site residue. Positions 23 and 88 each coordinate an anthocyanidin. D123 (charge relay) is an active-site residue. UDP-alpha-D-glucose is bound at residue T145. H154 contributes to the an anthocyanidin binding site. UDP-alpha-D-glucose is bound by residues A339, Q341, H356, W359, N360, S361, and E364. An anthocyanidin is bound at residue G379. D380 and Q381 together coordinate UDP-alpha-D-glucose.

It belongs to the UDP-glycosyltransferase family.

The enzyme catalyses a flavonol + UDP-alpha-D-glucose = a flavonol 3-O-beta-D-glucoside + UDP + H(+). It carries out the reaction quercetin + UDP-alpha-D-glucose = quercetin 3-O-beta-D-glucoside + UDP + H(+). Its pathway is flavonoid metabolism. In terms of biological role, flavonol 3-O-glucosyltransferase that catalyzes the transfer of glucose from UDP-glucose to the 3-OH position of quercetin and kaempferol. Possesses high quercetin 3-O-glucosyltransferase activity in vitro. Catalyzes the glycosylation of anthocyanins from UDP-glucose. Also active in vitro on benzoates and benzoate derivatives. The protein is Flavonol 3-O-glucosyltransferase of Arabidopsis thaliana (Mouse-ear cress).